Consider the following 116-residue polypeptide: U16-barytoxin-Tl1a (116 aa).

A signal peptide spans 1 to 20 (MKTIIVFLSLLVLATKFGDA). A propeptide spanning residues 21–74 (KEGVNQKQKKEVTQNEFREEYLNEMAAMSLVQQLEAIERALFENEAGRNSRQKR) is cleaved from the precursor. 3 disulfides stabilise this stretch: Cys75/Cys90, Cys82/Cys95, and Cys89/Cys110.

This sequence belongs to the neurotoxin 14 (magi-1) family. 06 (ICK-Trit) subfamily. In terms of tissue distribution, expressed by the venom gland.

It is found in the secreted. Functionally, ion channel inhibitor. In Trittame loki (Brush-footed trapdoor spider), this protein is U16-barytoxin-Tl1a.